Here is an 80-residue protein sequence, read N- to C-terminus: Acyl carrier protein (80 aa).

One can recognise a Carrier domain in the interval 4–79 (EEIKDKVFDI…QAIDYIVNAK (76 aa)). An O-(pantetheine 4'-phosphoryl)serine modification is found at Ser39.

It belongs to the acyl carrier protein (ACP) family. 4'-phosphopantetheine is transferred from CoA to a specific serine of apo-ACP by AcpS. This modification is essential for activity because fatty acids are bound in thioester linkage to the sulfhydryl of the prosthetic group.

It is found in the cytoplasm. It participates in lipid metabolism; fatty acid biosynthesis. Functionally, carrier of the growing fatty acid chain in fatty acid biosynthesis. The polypeptide is Acyl carrier protein (Prosthecochloris aestuarii (strain DSM 271 / SK 413)).